The primary structure comprises 264 residues: Thymidylate synthase (264 aa).

A dUMP-binding site is contributed by Arg-21. His-51 is a (6R)-5,10-methylene-5,6,7,8-tetrahydrofolate binding site. 126–127 contacts dUMP; it reads RR. Cys-146 acts as the Nucleophile in catalysis. DUMP contacts are provided by residues 166–169, Asn-177, and 207–209; these read RSCD and HLY. Asp-169 is a binding site for (6R)-5,10-methylene-5,6,7,8-tetrahydrofolate. A (6R)-5,10-methylene-5,6,7,8-tetrahydrofolate-binding site is contributed by Ser-263.

This sequence belongs to the thymidylate synthase family. Bacterial-type ThyA subfamily. As to quaternary structure, homodimer.

The protein localises to the cytoplasm. The enzyme catalyses dUMP + (6R)-5,10-methylene-5,6,7,8-tetrahydrofolate = 7,8-dihydrofolate + dTMP. It functions in the pathway pyrimidine metabolism; dTTP biosynthesis. Its function is as follows. Catalyzes the reductive methylation of 2'-deoxyuridine-5'-monophosphate (dUMP) to 2'-deoxythymidine-5'-monophosphate (dTMP) while utilizing 5,10-methylenetetrahydrofolate (mTHF) as the methyl donor and reductant in the reaction, yielding dihydrofolate (DHF) as a by-product. This enzymatic reaction provides an intracellular de novo source of dTMP, an essential precursor for DNA biosynthesis. The chain is Thymidylate synthase from Wigglesworthia glossinidia brevipalpis.